Reading from the N-terminus, the 96-residue chain is Aspartyl/glutamyl-tRNA(Asn/Gln) amidotransferase subunit C (96 aa).

It belongs to the GatC family. Heterotrimer of A, B and C subunits.

The catalysed reaction is L-glutamyl-tRNA(Gln) + L-glutamine + ATP + H2O = L-glutaminyl-tRNA(Gln) + L-glutamate + ADP + phosphate + H(+). It catalyses the reaction L-aspartyl-tRNA(Asn) + L-glutamine + ATP + H2O = L-asparaginyl-tRNA(Asn) + L-glutamate + ADP + phosphate + 2 H(+). Allows the formation of correctly charged Asn-tRNA(Asn) or Gln-tRNA(Gln) through the transamidation of misacylated Asp-tRNA(Asn) or Glu-tRNA(Gln) in organisms which lack either or both of asparaginyl-tRNA or glutaminyl-tRNA synthetases. The reaction takes place in the presence of glutamine and ATP through an activated phospho-Asp-tRNA(Asn) or phospho-Glu-tRNA(Gln). This chain is Aspartyl/glutamyl-tRNA(Asn/Gln) amidotransferase subunit C, found in Bacillus velezensis (strain DSM 23117 / BGSC 10A6 / LMG 26770 / FZB42) (Bacillus amyloliquefaciens subsp. plantarum).